The following is a 434-amino-acid chain: 26S proteasome regulatory subunit RPN6 (434 aa).

S2 carries the post-translational modification N-acetylserine. Residues 235 to 404 enclose the PCI domain; it reads AFSYFFESFE…GWLYVYETPN (170 aa).

It belongs to the proteasome subunit S9 family. Component of the lid subcomplex of the 19S proteasome regulatory particle complex (also named PA700 complex). The 26S proteasome consists of a 20S proteasome core and two 19S regulatory subunits. Post-translationally, N-acetylated by NAT1.

Functionally, component of the lid subcomplex of the 26S proteasome, a multiprotein complex involved in the ATP-dependent degradation of ubiquitinated proteins. In the complex, RPN6 is required for proteasome assembly. This chain is 26S proteasome regulatory subunit RPN6 (RPN6), found in Saccharomyces cerevisiae (strain ATCC 204508 / S288c) (Baker's yeast).